Here is a 302-residue protein sequence, read N- to C-terminus: Bifunctional protein FolD (302 aa).

Residues 165-167, S190, and I231 each bind NADP(+); that span reads GRS.

The protein belongs to the tetrahydrofolate dehydrogenase/cyclohydrolase family. Homodimer.

The catalysed reaction is (6R)-5,10-methylene-5,6,7,8-tetrahydrofolate + NADP(+) = (6R)-5,10-methenyltetrahydrofolate + NADPH. The enzyme catalyses (6R)-5,10-methenyltetrahydrofolate + H2O = (6R)-10-formyltetrahydrofolate + H(+). It participates in one-carbon metabolism; tetrahydrofolate interconversion. Its function is as follows. Catalyzes the oxidation of 5,10-methylenetetrahydrofolate to 5,10-methenyltetrahydrofolate and then the hydrolysis of 5,10-methenyltetrahydrofolate to 10-formyltetrahydrofolate. This Prochlorococcus marinus (strain MIT 9313) protein is Bifunctional protein FolD.